A 194-amino-acid chain; its full sequence is ATP-dependent Clp protease proteolytic subunit 1 (194 aa).

S99 (nucleophile) is an active-site residue. H124 is a catalytic residue.

It belongs to the peptidase S14 family. In terms of assembly, fourteen ClpP subunits assemble into 2 heptameric rings which stack back to back to give a disk-like structure with a central cavity, resembling the structure of eukaryotic proteasomes.

The protein resides in the cytoplasm. It catalyses the reaction Hydrolysis of proteins to small peptides in the presence of ATP and magnesium. alpha-casein is the usual test substrate. In the absence of ATP, only oligopeptides shorter than five residues are hydrolyzed (such as succinyl-Leu-Tyr-|-NHMec, and Leu-Tyr-Leu-|-Tyr-Trp, in which cleavage of the -Tyr-|-Leu- and -Tyr-|-Trp bonds also occurs).. Functionally, cleaves peptides in various proteins in a process that requires ATP hydrolysis. Has a chymotrypsin-like activity. Plays a major role in the degradation of misfolded proteins. The polypeptide is ATP-dependent Clp protease proteolytic subunit 1 (Borreliella burgdorferi (strain ATCC 35210 / DSM 4680 / CIP 102532 / B31) (Borrelia burgdorferi)).